Reading from the N-terminus, the 269-residue chain is Glutamate 5-kinase (269 aa).

Residue Lys14 coordinates ATP. Substrate contacts are provided by Ser54, Asp141, and Asn157. ATP contacts are provided by residues Ser177–Asp178 and Thr219–Lys225.

It belongs to the glutamate 5-kinase family.

Its subcellular location is the cytoplasm. The enzyme catalyses L-glutamate + ATP = L-glutamyl 5-phosphate + ADP. The protein operates within amino-acid biosynthesis; L-proline biosynthesis; L-glutamate 5-semialdehyde from L-glutamate: step 1/2. Functionally, catalyzes the transfer of a phosphate group to glutamate to form L-glutamate 5-phosphate. This chain is Glutamate 5-kinase, found in Clostridium perfringens (strain 13 / Type A).